The primary structure comprises 1822 residues: Signal-induced proliferation-associated 1-like protein 1 (1822 aa).

Disordered stretches follow at residues 1–30 and 47–125; these read MTSL…PKVH and GSSV…VSLN. Over residues 84–94 the composition is skewed to basic and acidic residues; the sequence is PPRKENVKESS. The span at 95-125 shows a compositional bias: low complexity; that stretch reads RSSQEIETSSCLESLSSKGSPVSQGSSVSLN. Phosphoserine occurs at positions 162, 187, 193, 208, 255, and 288. The disordered stretch occupies residues 277–297; it reads EREKPLKRRSKSETGDSSIFR. In terms of domain architecture, Rap-GAP spans 638 to 855; sequence FMKLDEQGLN…RTRQEYLKDL (218 aa). The PDZ domain maps to 992 to 1068; that stretch reads EMTLRRNGLG…VKVVIIPPHD (77 aa). Ser1117, Ser1126, Ser1155, Ser1166, Ser1188, Ser1209, and Ser1220 each carry phosphoserine. The disordered stretch occupies residues 1134–1165; it reads AGKGDGKMPLPERAANIPRSISSDGRPLERRL. Residues 1183 to 1252 are disordered; sequence SQCRNSPSNL…WQRSEDSLAD (70 aa). Residues 1188-1198 are compositionally biased toward low complexity; the sequence is SPSNLSSSSET. Residues 1225–1244 are compositionally biased toward polar residues; the sequence is DRQNTQSDIGGSGKSTPSWQ. A phosphoserine mark is found at Ser1273 and Ser1288. The disordered stretch occupies residues 1286–1324; the sequence is HLSPNKQGHSDSHYSSHSSSNTLSSNASSAHSDEKWYDG. Low complexity predominate over residues 1300 to 1315; sequence SSHSSSNTLSSNASSA. The residue at position 1344 (Ser1344) is a Phosphoserine; by PLK2. At Thr1348 the chain carries Phosphothreonine; by PLK2. Over residues 1358 to 1367 the composition is skewed to low complexity; the sequence is TASLGASTSS. The interval 1358-1382 is disordered; it reads TASLGASTSSPRSGPGKEKVAPLWH. Residue Ser1367 is modified to Phosphoserine; by CDK5. Ser1384 is modified (phosphoserine). Positions 1395–1407 are enriched in basic and acidic residues; sequence LETEGHGMDRKTE. The interval 1395–1493 is disordered; sequence LETEGHGMDR…SSSGPRTFYP (99 aa). Phosphoserine occurs at positions 1408, 1409, 1430, 1449, and 1451. Positions 1417–1436 are enriched in polar residues; the sequence is KSQGGSSPLTRENSTFSIND. Low complexity-rich tracts occupy residues 1437 to 1451 and 1471 to 1486; these read ATSH…HSAS and SSQL…SSSS. Phosphoserine is present on residues Ser1546 and Ser1567. The segment at 1567–1595 is disordered; the sequence is SPTPESQKNFKFHGLSSPQSPFPSTPTSR. At Thr1569 the chain carries Phosphothreonine. Ser1572, Ser1583, Ser1586, Ser1603, and Ser1606 each carry phosphoserine. Arg1619 is modified (asymmetric dimethylarginine). 8 positions are modified to phosphoserine: Ser1621, Ser1665, Ser1668, Ser1726, Ser1729, Ser1746, Ser1747, and Ser1752. Residues 1753-1813 adopt a coiled-coil conformation; it reads PTLASKVDQL…ASDKLKKFTE (61 aa).

As to quaternary structure, interacts (via PDZ domain) with EPHA4 (via PDZ motif); controls neuronal morphology through regulation of the RAP1 (RAP1A or RAP1B) and RAP2 (RAP2A, RAP2B or RAP2C) GTPases. Interacts with DLG4, PDLIM5, PDLIM7 and LZTS3. Interacts with the actin cytoskeleton. Post-translationally, ubiquitinated and degraded by the SCF(BTRC) following phosphorylation by PLK2. In terms of processing, phosphorylated at Ser-1367 by CDK5, creating a docking site for the POLO box domains of PLK2. Subsequently, PLK2 binds and phosphorylates SIPA1L1, leading to ubiquitination and degradation by the proteasome. As to expression, detected in brain (at protein level).

The protein localises to the cytoplasm. The protein resides in the cytoskeleton. It is found in the postsynaptic density. Its subcellular location is the synapse. It localises to the synaptosome. In terms of biological role, stimulates the GTPase activity of RAP2A. Promotes reorganization of the actin cytoskeleton and recruits DLG4 to F-actin. Contributes to the regulation of dendritic spine morphogenesis. This is Signal-induced proliferation-associated 1-like protein 1 (Sipa1l1) from Rattus norvegicus (Rat).